The primary structure comprises 345 residues: Serine proteinase inhibitor 2 (345 aa).

This sequence belongs to the serpin family. Poxviruses subfamily.

Its subcellular location is the host cytoplasm. In terms of biological role, viral serpin that inhibits both cysteine and serine proteinases involved in the regulation of host inflammatory and apoptosis processes. Major anti-apoptotic protein which inhibits both intrinsic and extrinsic pathways and strongly cleaves host CASP1 and CASP8 but is a rather poor inhibitor of host CASP3. Prevents the proteolytic activity of host interleukin-1-beta converting enzyme (ICE) and ICE-like enzymes. Can also block apoptosis through host tumor necrosis factor (TNF) receptor. The inhibition of host ICE is an example of a 'cross-class' interaction, in which a serpin inhibits a non-serine proteinase. Also inhibits granzyme B. The sequence is that of Serine proteinase inhibitor 2 (OPG199) from Vaccinia virus (strain Western Reserve) (VACV).